Consider the following 997-residue polypeptide: Glutamate [NMDA] receptor subunit 1 (997 aa).

The N-terminal stretch at 1 to 26 is a signal peptide; sequence MAMAEFVFCRPLFGLAIVLLVAPIDA. Over 27 to 573 the chain is Extracellular; that stretch reads AQRHTASDNP…TLVSFLQPFS (547 aa). Residues Asn-258, Asn-314, Asn-345, Asn-397, Asn-454, Asn-481, and Asn-501 are each glycosylated (N-linked (GlcNAc...) asparagine). Residues 530–532 and Arg-537 each bind glycine; that span reads PLT. The helical transmembrane segment at 574-594 threads the bilayer; sequence NTLWILVMVSVHVVALVLYLL. The Cytoplasmic segment spans residues 595–651; that stretch reads DRFSPFGRFKLSHSDSNEEKALNLSSAVWFAWGVLLNSGIGEGTPRSFSARVLGMVW. The chain crosses the membrane as a helical span at residues 652–672; that stretch reads AGFAMIIVASYTANLAAFLVL. At 673-831 the chain is on the extracellular side; it reads ERPKTKLSGI…KTPNTLGLKN (159 aa). Asn-693 carries an N-linked (GlcNAc...) asparagine glycan. Ser-703 and Asp-747 together coordinate glycine. A helical membrane pass occupies residues 832–852; the sequence is MAGVFILVGVGIAGGVGLIII. The Cytoplasmic portion of the chain corresponds to 853 to 997; the sequence is EVIYKKHQVK…YTSDVSHLVV (145 aa). Residues 970–997 form a disordered region; the sequence is LGKTRPQQSVLPPRYSPGYTSDVSHLVV. The span at 987–997 shows a compositional bias: polar residues; sequence GYTSDVSHLVV.

This sequence belongs to the glutamate-gated ion channel (TC 1.A.10.1) family. In terms of assembly, forms a heteromeric NMDA channel with Nmdar2. As to expression, highly expressed in adult heads: in the brain and ring gland. Low expression throughout the entire brain is also seen. Higher expression levels were observed in some scattered cell bodies and part of their fibers, including those from several pairs of DPM (dorsal-posterior-medial) neurons surrounding the calyx, DAL (dorsal-anterior-lateral) and DPL (dorsal-posterior-lateral) neurons in the lateral protocerebrum (LP), VAL (ventral-anterior-lateral) neurons in the anterior protocerebrum, and two pairs of VP (ventral-posterior) neurons in the posterior protocerebrum. Many cell bodies in the optic lobes show preferential expression. Punctuate expression is notably detected in many brain regions including the superior medial protocerebrum. Weakly expressed in the antennal lobes and central complex.

It localises to the cell membrane. Its subcellular location is the postsynaptic cell membrane. The protein localises to the postsynaptic density. Functionally, NMDA receptor subtype of glutamate-gated ion channels with high calcium permeability and voltage-dependent sensitivity to magnesium. Mediated by glycine. This protein plays a key role in synaptic plasticity, synaptogenesis, excitotoxicity, memory acquisition and learning. It mediates neuronal functions in glutamate neurotransmission. Is involved in the cell surface targeting of NMDA receptors. Plays a role in associative learning and in long-term memory consolidation. The protein is Glutamate [NMDA] receptor subunit 1 of Drosophila melanogaster (Fruit fly).